The primary structure comprises 450 residues: MWEAIKDRETGRIRSNSFANRFKSRRILSLQLSNRKDFVSPHRGSVNSLQVDLTEGRYLLSGAADGSAAVFDVQRATDYEASGLIAKHKCIFTVDKQHENGHKYAISSAIWYPIDTGLFITGSFDHYLKVWDTNTAQAVVDFKMPGKVYRTAMSSMAMSHTLIAAGTEDVQVRLCDIASGAFSHTLSGHRDGVMSVEWSTSSEWVLYTGGCDGAIRFWDIRRAGCFRVLDQSQTQLGFRPPILKRTAVGSKLSSVAKSSLGGQNRLKTLQSKQTGSQSVKGSSSAKASVEKSRQKRIHPGMLSTLDRATAHYGAVTGLKATNDGMYLLSAGSDSRIRLWDIESGRNTLVNFETGRIQTNKGIQLDTSDDPALVFVPCMKTVKAFGMWSGRTTLMLRGHYESVNTCCFNSNDQELYTSGSDRQILVWSPGGTVEDEMVQDEVAEDKDNWSD.

4 WD repeats span residues 41–81, 101–141, 148–185, and 188–228; these read PHRG…DYEA, GHKY…AVVD, VYRTAMSSMAMSHTLIAAGTEDVQVRLCDIASGAFSHT, and GHRD…CFRV. Residues 269–298 are disordered; the sequence is LQSKQTGSQSVKGSSSAKASVEKSRQKRIH. A compositionally biased stretch (low complexity) spans 271 to 287; sequence SKQTGSQSVKGSSSAKA. WD repeat units follow at residues 310-349 and 397-436; these read AHYGAVTGLKATNDGMYLLSAGSDSRIRLWDIESGRNTLV and GHYESVNTCCFNSNDQELYTSGSDRQILVWSPGGTVEDEM.

In terms of assembly, interacts with DDB1A. Expressed in roots, leaves, stems, flowers and siliques.

The protein resides in the nucleus. In terms of biological role, involved in UV-B tolerance and genome integrity. In association with DDB2, is necessary for repair of UV-B-induced DNA lesions. The sequence is that of WD repeat-containing protein ATCSA-1 from Arabidopsis thaliana (Mouse-ear cress).